The sequence spans 92 residues: Small ribosomal subunit protein uS19 (92 aa).

Belongs to the universal ribosomal protein uS19 family.

Protein S19 forms a complex with S13 that binds strongly to the 16S ribosomal RNA. The chain is Small ribosomal subunit protein uS19 from Acholeplasma laidlawii (strain PG-8A).